We begin with the raw amino-acid sequence, 422 residues long: tRNA hydroxylation protein P (422 aa).

The signal sequence occupies residues 1–58 (MNQVELLSPAGNLKKLKIALNYGADAVYGGVSHFSLRNRAGKEFTLETFKEGIDYAHA).

Belongs to the peptidase U32 family.

Functionally, involved in prephenate-dependent formation of 5-hydroxyuridine (ho5U) modification at position 34 in tRNAs, the first step in 5-carboxymethoxyuridine (cmo5U) biosynthesis. This Helicobacter pylori (strain ATCC 700392 / 26695) (Campylobacter pylori) protein is tRNA hydroxylation protein P.